A 199-amino-acid polypeptide reads, in one-letter code: Probable cobalt-precorrin-6B C(15)-methyltransferase (decarboxylating) (199 aa).

Residues T24, G48–G52, D72, and A101 each bind S-adenosyl-L-methionine.

It belongs to the methyltransferase superfamily. Archaeal-type CbiT family.

It catalyses the reaction Co-precorrin-6B + S-adenosyl-L-methionine = Co-precorrin-7 + S-adenosyl-L-homocysteine + CO2. The protein operates within cofactor biosynthesis; adenosylcobalamin biosynthesis; cob(II)yrinate a,c-diamide from sirohydrochlorin (anaerobic route): step 8/10. Catalyzes the methylation of C-15 in cobalt-precorrin-6B followed by the decarboxylation of C-12 to form cobalt-precorrin-7. The protein is Probable cobalt-precorrin-6B C(15)-methyltransferase (decarboxylating) of Saccharolobus islandicus (strain Y.N.15.51 / Yellowstone #2) (Sulfolobus islandicus).